The sequence spans 314 residues: MAFATRQLVRSLSSSSTAAASAKKILVKHVTVIGGGLMGAGIAQVAAATGHTVVLVDQTEDILAKSKKGIEESLRKVAKKKFAENPKAGDEFVEKTLSSISTSTDAASVVHSTDLVVEAIVENLKVKSELFKRLDKFAAEHTIFASNTSSLQITSLANATTRQDRFAGLHFFNPVPLMKLVEVVKTPMTSQKTLESLVDFSKTLGKHPVSCKDTPGFIVNRLLVPYLIEAVRLYERGDASKEDIDTAMKLGAGYPMGPFELLDYVGLDTTKFIIDGWHEMDSQNPLFQPSPAMNKLVAENKFGKKTGEGFYKYK.

The transit peptide at 1 to 12 (MAFATRQLVRSL) directs the protein to the mitochondrion. Residues 34–39 (GGGLMG) and aspartate 57 each bind NAD(+). CoA contacts are provided by serine 73 and lysine 80. Lysine 80 bears the N6-succinyllysine mark. 2 positions are modified to N6-acetyllysine; alternate: lysine 81 and lysine 87. N6-succinyllysine; alternate occurs at positions 81 and 87. Glutamate 122 provides a ligand contact to NAD(+). Lysine 125 carries the post-translational modification N6-acetyllysine. Position 127 (lysine 127) interacts with NAD(+). Lysine 127 is modified (N6-(2-hydroxyisobutyryl)lysine). Lysine 136 carries the post-translational modification N6-acetyllysine; alternate. An N6-succinyllysine; alternate modification is found at lysine 136. Residues serine 149 and asparagine 173 each coordinate NAD(+). Serine 149 lines the CoA pocket. An N6-acetyllysine modification is found at lysine 179. N6-acetyllysine; alternate occurs at positions 185, 192, and 202. N6-succinyllysine; alternate occurs at positions 185, 192, and 202. An N6-succinyllysine modification is found at lysine 206. Lysine 212 and lysine 241 each carry N6-acetyllysine; alternate. 2 positions are modified to N6-succinyllysine; alternate: lysine 212 and lysine 241. NAD(+) is bound at residue lysine 305. Residue lysine 312 is modified to N6-acetyllysine; alternate. Lysine 312 is modified (N6-succinyllysine; alternate).

Belongs to the 3-hydroxyacyl-CoA dehydrogenase family. Homodimer. Interacts with GLUD1; this interaction inhibits the activation of glutamate dehydrogenase 1 (GLUD1). In terms of processing, succinylation at Lys-81, adjacent to a coenzyme A binding site. Desuccinylated by SIRT5.

It localises to the mitochondrion matrix. It carries out the reaction a (3S)-3-hydroxyacyl-CoA + NAD(+) = a 3-oxoacyl-CoA + NADH + H(+). The enzyme catalyses (3S)-3-hydroxybutanoyl-CoA + NAD(+) = acetoacetyl-CoA + NADH + H(+). It catalyses the reaction (3S)-hydroxydecanoyl-CoA + NAD(+) = 3-oxodecanoyl-CoA + NADH + H(+). The catalysed reaction is (3S)-hydroxyhexadecanoyl-CoA + NAD(+) = 3-oxohexadecanoyl-CoA + NADH + H(+). It participates in lipid metabolism; fatty acid beta-oxidation. Mitochondrial fatty acid beta-oxidation enzyme that catalyzes the third step of the beta-oxidation cycle for medium and short-chain 3-hydroxy fatty acyl-CoAs (C4 to C10). Plays a role in the control of insulin secretion by inhibiting the activation of glutamate dehydrogenase 1 (GLUD1), an enzyme that has an important role in regulating amino acid-induced insulin secretion. Plays a role in the maintenance of normal spermatogenesis through the reduction of fatty acid accumulation in the testes. This is Hydroxyacyl-coenzyme A dehydrogenase, mitochondrial (HADH) from Sus scrofa (Pig).